A 344-amino-acid polypeptide reads, in one-letter code: Ketol-acid reductoisomerase (NADP(+)) (344 aa).

The region spanning 1-181 (MATMYYEQNI…GAARGGLLET (181 aa)) is the KARI N-terminal Rossmann domain. NADP(+)-binding positions include 25-28 (YGSQ), Arg48, Ser52, and 82-85 (DERQ). His107 is an active-site residue. Gly133 contributes to the NADP(+) binding site. Residues 182–327 (TFKEETETDL…AKLREMMPFI (146 aa)) form the KARI C-terminal knotted domain. The Mg(2+) site is built by Asp190, Glu194, Glu226, and Glu230. Substrate is bound at residue Ser251.

This sequence belongs to the ketol-acid reductoisomerase family. Mg(2+) serves as cofactor.

The enzyme catalyses (2R)-2,3-dihydroxy-3-methylbutanoate + NADP(+) = (2S)-2-acetolactate + NADPH + H(+). It carries out the reaction (2R,3R)-2,3-dihydroxy-3-methylpentanoate + NADP(+) = (S)-2-ethyl-2-hydroxy-3-oxobutanoate + NADPH + H(+). It participates in amino-acid biosynthesis; L-isoleucine biosynthesis; L-isoleucine from 2-oxobutanoate: step 2/4. The protein operates within amino-acid biosynthesis; L-valine biosynthesis; L-valine from pyruvate: step 2/4. Involved in the biosynthesis of branched-chain amino acids (BCAA). Catalyzes an alkyl-migration followed by a ketol-acid reduction of (S)-2-acetolactate (S2AL) to yield (R)-2,3-dihydroxy-isovalerate. In the isomerase reaction, S2AL is rearranged via a Mg-dependent methyl migration to produce 3-hydroxy-3-methyl-2-ketobutyrate (HMKB). In the reductase reaction, this 2-ketoacid undergoes a metal-dependent reduction by NADPH to yield (R)-2,3-dihydroxy-isovalerate. The sequence is that of Ketol-acid reductoisomerase (NADP(+)) from Lysinibacillus sphaericus (strain C3-41).